The sequence spans 479 residues: Glutamate--tRNA ligase (479 aa).

The short motif at 9–19 is the 'HIGH' region element; it reads PSPTGLFHIGT. The 'KMSKS' region signature appears at 248 to 252; sequence KLSKR. Lys251 provides a ligand contact to ATP.

The protein belongs to the class-I aminoacyl-tRNA synthetase family. Glutamate--tRNA ligase type 1 subfamily. In terms of assembly, monomer.

Its subcellular location is the cytoplasm. It catalyses the reaction tRNA(Glu) + L-glutamate + ATP = L-glutamyl-tRNA(Glu) + AMP + diphosphate. In terms of biological role, catalyzes the attachment of glutamate to tRNA(Glu) in a two-step reaction: glutamate is first activated by ATP to form Glu-AMP and then transferred to the acceptor end of tRNA(Glu). The sequence is that of Glutamate--tRNA ligase from Prochlorococcus marinus (strain MIT 9215).